We begin with the raw amino-acid sequence, 142 residues long: Large ribosomal subunit protein uL13 (142 aa).

This sequence belongs to the universal ribosomal protein uL13 family. As to quaternary structure, part of the 50S ribosomal subunit.

This protein is one of the early assembly proteins of the 50S ribosomal subunit, although it is not seen to bind rRNA by itself. It is important during the early stages of 50S assembly. The protein is Large ribosomal subunit protein uL13 of Coxiella burnetii (strain CbuK_Q154) (Coxiella burnetii (strain Q154)).